Here is a 91-residue protein sequence, read N- to C-terminus: UPF0386 protein Caul_4643 (91 aa).

This sequence belongs to the UPF0386 family.

This chain is UPF0386 protein Caul_4643, found in Caulobacter sp. (strain K31).